Consider the following 137-residue polypeptide: Histone H2B (137 aa).

Positions 1 to 10 are enriched in basic and acidic residues; that stretch reads MAPKAADKKP. Residues 1–45 are disordered; it reads MAPKAADKKPASKAPATASKAPEKKDAGKKTAPSGDKKKRTKARK. Residues K8 and K9 each carry the N6-acetyllysine; alternate modification. Glycyl lysine isopeptide (Lys-Gly) (interchain with G-Cter in SUMO); alternate cross-links involve residues K8 and K9. At S12 the chain carries Phosphoserine. K13 bears the N6-acetyllysine mark. Position 24 is an N6-acetyllysine; alternate (K24). K24 is covalently cross-linked (Glycyl lysine isopeptide (Lys-Gly) (interchain with G-Cter in SUMO); alternate). K25 is covalently cross-linked (Glycyl lysine isopeptide (Lys-Gly) (interchain with G-Cter in SUMO)). A Glycyl lysine isopeptide (Lys-Gly) (interchain with G-Cter in ubiquitin) cross-link involves residue K131.

Belongs to the histone H2B family. The nucleosome is a histone octamer containing two molecules each of H2A, H2B, H3 and H4 assembled in one H3-H4 heterotetramer and two H2A-H2B heterodimers. The octamer wraps approximately 147 bp of DNA. Monoubiquitinated by the UBC2-BRE1 complex to form H2BK123ub1. H2BK123ub1 gives a specific tag for epigenetic transcriptional activation and is also prerequisite for H3K4me and H3K79me formation. H2BK123ub1 also modulates the formation of double-strand breaks during meiosis and is a prerequisite for DNA-damage checkpoint activation. Post-translationally, phosphorylated to form H2BS10ph during progression through meiotic prophase. May be correlated with chromosome condensation. In terms of processing, acetylated by GCN5 to form H2BK11ac and H2BK16ac. H2BK16ac can also be formed by ESA1. Acetylation of N-terminal lysines and particularly formation of H2BK11acK16ac has a positive effect on transcription. Sumoylation to form H2BK6su or H2BK7su, and probably also H2BK16su or H2BK17su, occurs preferentially near the telomeres and represses gene transcription.

The protein localises to the nucleus. The protein resides in the chromosome. In terms of biological role, core component of nucleosome. Nucleosomes wrap and compact DNA into chromatin, limiting DNA accessibility to the cellular machineries which require DNA as a template. Histones thereby play a central role in transcription regulation, DNA repair, DNA replication and chromosomal stability. DNA accessibility is regulated via a complex set of post-translational modifications of histones, also called histone code, and nucleosome remodeling. This chain is Histone H2B (HTB1), found in Chaetomium globosum (strain ATCC 6205 / CBS 148.51 / DSM 1962 / NBRC 6347 / NRRL 1970) (Soil fungus).